We begin with the raw amino-acid sequence, 149 residues long: Transcriptional repressor NrdR (149 aa).

A zinc finger lies at 3–34; the sequence is CPFCGNLETQVVETRVSEDADFIRRRRQCGAC. Residues 49–139 form the ATP-cone domain; sequence PAIVKKDGRR…VYRSFEDIDE (91 aa).

It belongs to the NrdR family. Zn(2+) serves as cofactor.

In terms of biological role, negatively regulates transcription of bacterial ribonucleotide reductase nrd genes and operons by binding to NrdR-boxes. The protein is Transcriptional repressor NrdR of Polaromonas sp. (strain JS666 / ATCC BAA-500).